The primary structure comprises 1599 residues: Protein TOPAZ1 (1599 aa).

Disordered regions lie at residues 1–42 (MVAQ…KESL), 159–185 (GCMHVPENSSKSKKENPRSLIDKTDPS), 802–836 (PNVAEEHQSADSKHMELPEKKEPSDHLRELPVPDP), and 867–889 (VTHETSSNEKPGGLSEQTKSSDL). 2 stretches are compositionally biased toward basic and acidic residues: residues 168-183 (SKSKKENPRSLIDKTD) and 805-832 (AEEHQSADSKHMELPEKKEPSDHLRELP). The span at 874–884 (NEKPGGLSEQT) shows a compositional bias: polar residues.

In terms of tissue distribution, expressed in both adult testis and fetal ovary, mostly in germ cells (at protein level).

It is found in the cytoplasm. Its subcellular location is the cytosol. Functionally, important for normal spermatogenesis and male fertility. Specifically required for progression to the post-meiotic stages of spermatocyte development. Seems to be necessary for normal expression levels of a number of testis-expressed gene transcripts, although its role in this process is unclear. The protein is Protein TOPAZ1 (TOPAZ1) of Ovis aries (Sheep).